Reading from the N-terminus, the 233-residue chain is Octanoyltransferase (233 aa).

The region spanning 33 to 216 is the BPL/LPL catalytic domain; sequence GRAQDTVILL…HLVRALSSNG (184 aa). Substrate is bound by residues 71-78, 146-148, and 159-161; these read RGGRITWH, AIG, and GFA. Catalysis depends on Cys-177, which acts as the Acyl-thioester intermediate.

The protein belongs to the LipB family.

It localises to the cytoplasm. It carries out the reaction octanoyl-[ACP] + L-lysyl-[protein] = N(6)-octanoyl-L-lysyl-[protein] + holo-[ACP] + H(+). It functions in the pathway protein modification; protein lipoylation via endogenous pathway; protein N(6)-(lipoyl)lysine from octanoyl-[acyl-carrier-protein]: step 1/2. Catalyzes the transfer of endogenously produced octanoic acid from octanoyl-acyl-carrier-protein onto the lipoyl domains of lipoate-dependent enzymes. Lipoyl-ACP can also act as a substrate although octanoyl-ACP is likely to be the physiological substrate. The sequence is that of Octanoyltransferase from Clavibacter michiganensis subsp. michiganensis (strain NCPPB 382).